Here is a 134-residue protein sequence, read N- to C-terminus: Early E3B 14.9 kDa protein (134 aa).

A signal peptide spans 1 to 19 (MQAMLPVILILLLPCIALA). The chain crosses the membrane as a helical span at residues 54 to 78 (YWIVIVGIINILSCTFFSITIYPTF).

It belongs to the adenoviridae E3_14 family. In terms of processing, phosphorylated on serine; O-glycosylated, but not N-glycosylated.

Its subcellular location is the host membrane. Its function is as follows. Down-regulates the EGF receptor and prevents cytolysis by TNF. The protein is Early E3B 14.9 kDa protein of Homo sapiens (Human).